The following is a 279-amino-acid chain: MNITLGYIDPVAFSLGPIQVRWYGIIIACGILLGYFIAQAALKQVGLHKDTLIDIIFYSAIVGFIVARIYFVTFQWPYYMNHLSEIPKIWHGGIAIHGGLIGGLISGIIVCKIKNLHPFQIGDIVAPSIILAQGIGRWGNFMNHEAHGGPVSRAFLEHLHLPDFIIRNMYIEGQYYHPTFLYESIWDVIGFVILITLRKRLKLGETFFGYLIWYSVGRFFVEAMRTDSLMLTSHIRVAQLVSVVLIMISVIFVIYRRVKYQPIKYENSGPLTWPIKKAK.

Helical transmembrane passes span 22 to 42 (WYGI…QAAL), 52 to 72 (LIDI…IYFV), and 89 to 109 (IWHG…SGII). Arg137 is an a 1,2-diacyl-sn-glycero-3-phospho-(1'-sn-glycerol) binding site. The next 2 membrane-spanning stretches (helical) occupy residues 203-223 (LGET…FVEA) and 235-255 (IRVA…FVIY).

It belongs to the Lgt family.

It is found in the cell membrane. The enzyme catalyses L-cysteinyl-[prolipoprotein] + a 1,2-diacyl-sn-glycero-3-phospho-(1'-sn-glycerol) = an S-1,2-diacyl-sn-glyceryl-L-cysteinyl-[prolipoprotein] + sn-glycerol 1-phosphate + H(+). It functions in the pathway protein modification; lipoprotein biosynthesis (diacylglyceryl transfer). Its function is as follows. Catalyzes the transfer of the diacylglyceryl group from phosphatidylglycerol to the sulfhydryl group of the N-terminal cysteine of a prolipoprotein, the first step in the formation of mature lipoproteins. This is Phosphatidylglycerol--prolipoprotein diacylglyceryl transferase from Staphylococcus epidermidis (strain ATCC 35984 / DSM 28319 / BCRC 17069 / CCUG 31568 / BM 3577 / RP62A).